The following is a 254-amino-acid chain: Alcohol dehydrogenase (254 aa).

10–33 (FVAGLGGIGLDTSREIVKSGPKNL) is an NAD(+) binding site. Position 138 (Ser138) interacts with substrate. Residue Tyr151 is the Proton acceptor of the active site.

This sequence belongs to the short-chain dehydrogenases/reductases (SDR) family. In terms of assembly, homodimer.

It catalyses the reaction a primary alcohol + NAD(+) = an aldehyde + NADH + H(+). The enzyme catalyses a secondary alcohol + NAD(+) = a ketone + NADH + H(+). In Drosophila nigra (Fruit fly), this protein is Alcohol dehydrogenase (Adh).